A 572-amino-acid polypeptide reads, in one-letter code: Mitochondrial chaperone TCM62 (572 aa).

The transit peptide at 1–16 directs the protein to the mitochondrion; sequence MLRNCLRKLGNHQTKC. Topologically, residues 17–471 are mitochondrial matrix; it reads SVKTLHTPIY…KANEPNFMTK (455 aa). Residues 472–488 form a helical membrane-spanning segment; sequence VGINAVLSAVILPSEVA. The Mitochondrial intermembrane segment spans residues 489–572; that stretch reads FKNAYGYNYY…VYKKPERHKA (84 aa).

Belongs to the chaperonin (HSP60) family. In terms of assembly, forms a high molecular mass protein complex of approximately 850 kDa.

Its subcellular location is the mitochondrion inner membrane. Chaperone. Required for the assembly of succinate dehydrogenase subunits. Ensures mitochondrial gene expression at elevated temperatures and prevents heat-aggregation of the ribosomal subunit VAR1. This is Mitochondrial chaperone TCM62 (TCM62) from Saccharomyces cerevisiae (strain ATCC 204508 / S288c) (Baker's yeast).